The primary structure comprises 418 residues: Nuclear receptor coactivator 6 (418 aa).

Disordered stretches follow at residues 1 to 21 and 77 to 98; these read EQIM…QNQS and PPGP…ANND. The interval 1–215 is TBP/GTF2A-binding region; sequence EQIMTNQMQG…PPRKKKNCHQ (215 aa). Positions 1-352 are CREBBP-binding region; that stretch reads EQIMTNQMQG…LPVSQNVHPP (352 aa). Residues 1–418 are NCOA1-binding region; it reads EQIMTNQMQG…YQESPQNSSS (418 aa). The NCOA6IP-binding region stretch occupies residues 60 to 214; sequence VSNSPSQVMG…KPPRKKKNCH (155 aa). Residues 84 to 98 are compositionally biased toward polar residues; it reads MAQQHTDPATTANND. Serine 171 carries the post-translational modification Phosphoserine. The short motif at 174–178 is the LXXLL motif element; it reads LVNLL. A disordered region spans residues 186–418; sequence HFGVNNKQNN…YQESPQNSSS (233 aa). The span at 190–199 shows a compositional bias: low complexity; it reads NNKQNNTNAN. Basic residues predominate over residues 200 to 212; it reads KQKKKKPPRKKKN. Over residues 269–279 the composition is skewed to low complexity; that stretch reads PLQQMPPQLMQ. Residues 282–310 are compositionally biased toward pro residues; the sequence is APPPQPPQQQPQPQLPQQQPQPQPPPPSQ. Residues 311 to 336 are compositionally biased toward low complexity; that stretch reads PQSQQQQQQQQQQQQQQMMMMLMMQQ. An asymmetric dimethylarginine mark is found at arginine 342 and arginine 353. Residues 358–370 are compositionally biased toward polar residues; that stretch reads PDSQRVPMQQSGN. Arginine 391 carries the asymmetric dimethylarginine modification. Residues 399–418 show a composition bias toward polar residues; sequence PLGSNSRKMVYQESPQNSSS.

In terms of assembly, monomer and homodimer. Interacts in vitro with the basal transcription factors GTF2A and TBP, suggesting an autonomous transactivation function. Interacts with NCOA1, CRSP3, RBM14, the histone acetyltransferase proteins EP300 and CREBBP, and with methyltransferase proteins NCOA6IP and PRMT2. Component of the MLL2/3 complex (also named ASCOM complex), at least composed of KMT2D/MLL2 or KMT2C/MLL3, ASH2L, RBBP5, WDR5, NCOA6, DPY30, KDM6A, PAXIP1/PTIP, PAGR1 and alpha- and beta-tubulin. Interacts with ZNF335; may enhance ligand-dependent transcriptional activation by nuclear hormone receptors. Phosphorylated.

It localises to the nucleus. In terms of biological role, nuclear receptor coactivator that directly binds nuclear receptors and stimulates the transcriptional activities in a hormone-dependent fashion. Coactivate expression in an agonist- and AF2-dependent manner. May coactivate expression via a remodeling of chromatin and its interaction with histone acetyltransferase proteins. Involved in the coactivation of different nuclear receptors, such as for steroids (GR and ERs), retinoids (RARs and RXRs), thyroid hormone (TRs), vitamin D3 (VDR) and prostanoids (PPARs). Probably functions as a general coactivator, rather than just a nuclear receptor coactivator. May also be involved in the coactivation of the NF-kappa-B pathway. The sequence is that of Nuclear receptor coactivator 6 (Ncoa6) from Rattus norvegicus (Rat).